Reading from the N-terminus, the 373-residue chain is MALSKTYGQKPIKFQLEEDGDFYMIGSEVGNYLRMFRGSLYKRYPSLSRRLATVEERKKIVASSHDHGYTTLATSVTLLKASEVEEIFDGHDEKYKAVSISTEPPAYLREQKAKRNSQWVPTLPNSSHHLDAVPCSTTINRNRMGRDKKRTFPLCFDDHDPAVIHENASQQEVLVPIRLDMEIDGQKLRDAFTWNMNEKLMTPEMFAEILCDDLDLSPLTFVPAIASAIRQQIESYPTDSILDEQMDQRVIIKLNIHVGNISLVDQFEWDMSEKENSPEKFALKLCSELGLGGEFVTTIAYSIRGQLSWHQRTYAFSENPLPTVEIAIRNTGDADQWCPLLETLTDAEMEKKIRDQDRNTRRMRRLANTAPAW.

Residues 1–101 form a DNA-binding region; that stretch reads MALSKTYGQK…DEKYKAVSIS (101 aa).

The protein belongs to the SNF5 family. As to quaternary structure, component of the multiprotein chromatin-remodeling complexes SWI/SNF. Component of neural progenitors-specific chromatin remodeling complex (npBAF complex) and the neuron-specific chromatin remodeling complex (nBAF complex). Component of the BAF (SWI/SNF) chromatin remodeling complex. Component of the SWI/SNF-B (PBAF) chromatin remodeling complex. Binds to double-stranded DNA.

It localises to the nucleus. Its function is as follows. Involved in chromatin-remodeling. Core component of the BAF (SWI/SNF) complex. This ATP-dependent chromatin-remodeling complex plays important roles in cell proliferation and differentiation, in cellular antiviral activities and inhibition of tumor formation. Belongs to the neural progenitors-specific chromatin remodeling complex (npBAF complex) and the neuron-specific chromatin remodeling complex (nBAF complex) and may play a role in neural development. The chain is SWI/SNF-related matrix-associated actin-dependent regulator of chromatin subfamily B member 1-A (smarcb1a) from Danio rerio (Zebrafish).